The chain runs to 331 residues: Aspartate carbamoyltransferase catalytic subunit (331 aa).

Carbamoyl phosphate contacts are provided by Arg-62 and Thr-63. Lys-90 contributes to the L-aspartate binding site. The carbamoyl phosphate site is built by Arg-112, His-145, and Gln-148. The L-aspartate site is built by Arg-185 and Arg-246. Carbamoyl phosphate contacts are provided by Gly-287 and Pro-288.

The protein belongs to the aspartate/ornithine carbamoyltransferase superfamily. ATCase family. As to quaternary structure, heterododecamer (2C3:3R2) of six catalytic PyrB chains organized as two trimers (C3), and six regulatory PyrI chains organized as three dimers (R2).

It catalyses the reaction carbamoyl phosphate + L-aspartate = N-carbamoyl-L-aspartate + phosphate + H(+). It functions in the pathway pyrimidine metabolism; UMP biosynthesis via de novo pathway; (S)-dihydroorotate from bicarbonate: step 2/3. In terms of biological role, catalyzes the condensation of carbamoyl phosphate and aspartate to form carbamoyl aspartate and inorganic phosphate, the committed step in the de novo pyrimidine nucleotide biosynthesis pathway. This Synechocystis sp. (strain ATCC 27184 / PCC 6803 / Kazusa) protein is Aspartate carbamoyltransferase catalytic subunit.